A 71-amino-acid polypeptide reads, in one-letter code: DNA-directed RNA polymerase subunit omega (71 aa).

This sequence belongs to the RNA polymerase subunit omega family. The RNAP catalytic core consists of 2 alpha, 1 beta, 1 beta' and 1 omega subunit. When a sigma factor is associated with the core the holoenzyme is formed, which can initiate transcription.

The enzyme catalyses RNA(n) + a ribonucleoside 5'-triphosphate = RNA(n+1) + diphosphate. In terms of biological role, promotes RNA polymerase assembly. Latches the N- and C-terminal regions of the beta' subunit thereby facilitating its interaction with the beta and alpha subunits. The sequence is that of DNA-directed RNA polymerase subunit omega from Syntrophomonas wolfei subsp. wolfei (strain DSM 2245B / Goettingen).